The chain runs to 464 residues: Argininosuccinate lyase (464 aa).

Belongs to the lyase 1 family. Argininosuccinate lyase subfamily.

It localises to the cytoplasm. The enzyme catalyses 2-(N(omega)-L-arginino)succinate = fumarate + L-arginine. It functions in the pathway amino-acid biosynthesis; L-arginine biosynthesis; L-arginine from L-ornithine and carbamoyl phosphate: step 3/3. In Pseudomonas aeruginosa (strain UCBPP-PA14), this protein is Argininosuccinate lyase.